The primary structure comprises 84 residues: Cell division topological specificity factor (84 aa).

It belongs to the MinE family.

Prevents the cell division inhibition by proteins MinC and MinD at internal division sites while permitting inhibition at polar sites. This ensures cell division at the proper site by restricting the formation of a division septum at the midpoint of the long axis of the cell. This chain is Cell division topological specificity factor, found in Paraburkholderia phymatum (strain DSM 17167 / CIP 108236 / LMG 21445 / STM815) (Burkholderia phymatum).